The chain runs to 448 residues: UDP-N-acetylmuramate--L-alanine ligase (448 aa).

Residue 118 to 124 participates in ATP binding; it reads GTHGKTT.

Belongs to the MurCDEF family.

The protein localises to the cytoplasm. It carries out the reaction UDP-N-acetyl-alpha-D-muramate + L-alanine + ATP = UDP-N-acetyl-alpha-D-muramoyl-L-alanine + ADP + phosphate + H(+). Its pathway is cell wall biogenesis; peptidoglycan biosynthesis. Cell wall formation. The polypeptide is UDP-N-acetylmuramate--L-alanine ligase (Flavobacterium psychrophilum (strain ATCC 49511 / DSM 21280 / CIP 103535 / JIP02/86)).